A 350-amino-acid polypeptide reads, in one-letter code: MKNKYYPLRSSIDELSTKNDNEIDLEKGPLPEYNSEDGSTLPPYSENLKLKDPKQMGANNPNLFNTDESTTPPDYGEDSLSHRENHSSGTTDNSSPFLIKLLISFIPIFVLNVPAVCYLTYKDALFKDYGKDEWVYFGMWCASCLMIFISLWCFYETWTQAVAQCVKVTAISLAKCVKVISIGLFNIRREMMIIIWILWLIICCILFVYIKSGDLNLNKALIYSTCTISAVLLLIVSSVCIPFWTFERTLAKLAKVFLLQSGIVLVLNGTMFLRGKHFEWTGCEIEASVLFIMGNVLFLCEMECPGALRRMPKSIRNGIASFLGGIANAIRGANDNNDIPLGEMDVESEV.

The interval 1-92 is disordered; that stretch reads MKNKYYPLRS…RENHSSGTTD (92 aa). Positions 11–29 are enriched in basic and acidic residues; it reads SIDELSTKNDNEIDLEKGP. Over residues 57 to 72 the composition is skewed to polar residues; the sequence is GANNPNLFNTDESTTP. Helical transmembrane passes span 97–117, 134–154, 165–185, 190–210, 226–246, 253–273, and 280–300; these read FLIKLLISFIPIFVLNVPAVC, WVYFGMWCASCLMIFISLWCF, CVKVTAISLAKCVKVISIGLF, EMMIIIWILWLIICCILFVYI, CTISAVLLLIVSSVCIPFWTF, LAKVFLLQSGIVLVLNGTMFL, and WTGCEIEASVLFIMGNVLFLC.

Belongs to the WTF family. In terms of assembly, homomer. Forms protein aggregates. The two isoforms can interact with each other and with themselves. High sequence similarity is required for their interaction.

It localises to the spore membrane. The protein resides in the vacuole membrane. The protein localises to the ascus epiplasm. It is found in the cytoplasm. Its subcellular location is the endoplasmic reticulum membrane. Functionally, promotes unequal transmission of alleles from the parental zygote to progeny spores by acting as poison/antidote system where the poison and antidote proteins are produced from the same locus; the poison component is trans-acting and targets all spores within an ascus whereas the antidote component is spore-specific, leading to poisoning of all progeny that do not inherit the allele. Its function is as follows. Localizes isoform 2 to the vacuole thereby facilitating its degradation. In terms of biological role, forms toxic aggregates that disrupt spore maturation. This Schizosaccharomyces kambucha (Fission yeast) protein is Meiotic driver wtf30.